The following is a 630-amino-acid chain: Sodium-dependent serotonin transporter (630 aa).

Over 1–87 the chain is Cytoplasmic; it reads METTPLNSQK…ERETWGKKVD (87 aa). The tract at residues 31-59 is disordered; sequence VPTPGDKVESGQISNGYSAVPSPGAGDDT. Tyrosine 47 is modified (phosphotyrosine). The chain crosses the membrane as a helical span at residues 88–112; sequence FLLSVIGYAVDLGNVWRFPYICYQN. Residues glycine 94, alanine 96, valine 97, aspartate 98, and asparagine 101 each coordinate Na(+). Position 98 (aspartate 98) interacts with serotonin. The Extracellular portion of the chain corresponds to 113–115; sequence GGG. Residues 116-135 form a helical membrane-spanning segment; the sequence is AFLIPYTIMAIFGGIPLFYM. The Cytoplasmic segment spans residues 136–160; that stretch reads ELALGQYHRNGCISIWRKICPIFKG. Residue tyrosine 142 is modified to Phosphotyrosine. A helical membrane pass occupies residues 161-186; it reads IGYAICIIAFYIASYYNTIMAWALYY. The Extracellular segment spans residues 187–252; sequence LISSFTDQLP…KGLQDLGGIS (66 aa). Cysteine 200 and cysteine 209 are joined by a disulfide. Residues asparagine 208 and asparagine 217 are each glycosylated (N-linked (GlcNAc...) asparagine). Residues 253–271 form a helical membrane-spanning segment; that stretch reads WQLALCIMLIFTVIYFSIW. Residues 272–277 lie on the Cytoplasmic side of the membrane; sequence KGVKTS. Threonine 276 bears the Phosphothreonine mark. The chain crosses the membrane as a helical span at residues 278-297; that stretch reads GKVVWVTATFPYIILSVLLV. Residues 298–324 are Extracellular-facing; it reads RGATLPGAWRGVLFYLKPNWQKLLETG. Residues 325–347 traverse the membrane as a helical segment; that stretch reads VWIDAAAQIFFSLGPGFGVLLAF. Residue serine 336 coordinates Na(+). The Cytoplasmic portion of the chain corresponds to 348 to 360; that stretch reads ASYNKFNNNCYQD. Residues 361 to 380 form a helical membrane-spanning segment; it reads ALVTSVVNCMTSFVSGFVIF. A Na(+)-binding site is contributed by asparagine 368. Over 381–421 the chain is Extracellular; the sequence is TVLGYMAEMRNEDVSEVAKDAGPSLLFITYAEAIANMPAST. Residues 422-443 traverse the membrane as a helical segment; sequence FFAIIFFLMLITLGLDSTFAGL. Na(+) is bound by residues leucine 434, aspartate 437, and serine 438. Serotonin is bound at residue threonine 439. Topologically, residues 444 to 463 are cytoplasmic; sequence EGVITAVLDEFPHIWAKRRE. Residues 464–483 traverse the membrane as a helical segment; the sequence is WFVLAVVITCFFGSLVTLTF. At 484–494 the chain is on the extracellular side; sequence GGAYVVKLLEE. Serotonin is bound by residues glutamate 494 and tyrosine 495. Residues 495 to 516 traverse the membrane as a helical segment; it reads YATGPAVLTVALIEAVAVSWFY. Topologically, residues 517 to 538 are cytoplasmic; sequence GITQFCRDVKEMLGFSPGWFWR. The helical transmembrane segment at 539 to 558 threads the bilayer; it reads ICWVAISPLFLLFIICSFLM. Phenylalanine 556 and serine 559 together coordinate serotonin. The Extracellular segment spans residues 559 to 574; sequence SPPQLRLFQYNYPHWS. A helical transmembrane segment spans residues 575-595; sequence IILGYCIGTSSFVCIPTYIAY. Residues 596–630 are Cytoplasmic-facing; sequence RLISTPGTFKERIIKSITPETPTEIPCGDVRLNAV. An interaction with RAB4A region spans residues 616–624; that stretch reads TPTEIPCGD.

The protein belongs to the sodium:neurotransmitter symporter (SNF) (TC 2.A.22) family. SLC6A4 subfamily. As to quaternary structure, monomer or homooligomer. Interacts (via C-terminus) with SCAMP2; the interaction is direct and retains transporter molecules intracellularly. Interacts with filamentous actin and STX1A. Interacts (via the N-terminus) with STX1A (via the H3 domain); this interaction regulates SLC4A6 channel conductance. Interacts with SEC23A, SEC24C and PATJ. Interacts with NOS1; the interaction may diminish the cell surface localization of SERT in the brain and, correspondingly, reduce serotonin reuptake. Interacts with TGFB1I1. Interacts with ITGAV:ITGB3. Interacts (via C-terminus) with ITGB3; this interaction regulates SLC6A4 trafficking. Post-translationally, phosphorylation at Thr-276 increases 5-HT uptake and is required for cGMP-mediated SERT regulation.

Its subcellular location is the cell membrane. It localises to the endomembrane system. The protein resides in the endosome membrane. The protein localises to the synapse. It is found in the cell junction. Its subcellular location is the focal adhesion. It localises to the cell projection. The protein resides in the neuron projection. It catalyses the reaction serotonin(out) + K(+)(in) + Na(+)(out) + H(+)(in) = serotonin(in) + K(+)(out) + Na(+)(in) + H(+)(out). Its function is as follows. Serotonin transporter that cotransports serotonin with one Na(+) ion in exchange for one K(+) ion and possibly one proton in an overall electroneutral transport cycle. Transports serotonin across the plasma membrane from the extracellular compartment to the cytosol thus limiting serotonin intercellular signaling. Essential for serotonin homeostasis in the central nervous system. In the developing somatosensory cortex, acts in glutamatergic neurons to control serotonin uptake and its trophic functions accounting for proper spatial organization of cortical neurons and elaboration of sensory circuits. In the mature cortex, acts primarily in brainstem raphe neurons to mediate serotonin uptake from the synaptic cleft back into the pre-synaptic terminal thus terminating serotonin signaling at the synapse. Modulates mucosal serotonin levels in the gastrointestinal tract through uptake and clearance of serotonin in enterocytes. Required for enteric neurogenesis and gastrointestinal reflexes. Regulates blood serotonin levels by ensuring rapid high affinity uptake of serotonin from plasma to platelets, where it is further stored in dense granules via vesicular monoamine transporters and then released upon stimulation. Mechanistically, the transport cycle starts with an outward-open conformation having Na1(+) and Cl(-) sites occupied. The binding of a second extracellular Na2(+) ion and serotonin substrate leads to structural changes to outward-occluded to inward-occluded to inward-open, where the Na2(+) ion and serotonin are released into the cytosol. Binding of intracellular K(+) ion induces conformational transitions to inward-occluded to outward-open and completes the cycle by releasing K(+) possibly together with a proton bound to Asp-98 into the extracellular compartment. Na1(+) and Cl(-) ions remain bound throughout the transport cycle. Additionally, displays serotonin-induced channel-like conductance for monovalent cations, mainly Na(+) ions. The channel activity is uncoupled from the transport cycle and may contribute to the membrane resting potential or excitability. The sequence is that of Sodium-dependent serotonin transporter (SLC6A4) from Macaca mulatta (Rhesus macaque).